Reading from the N-terminus, the 349-residue chain is Protein-glutamate methylesterase/protein-glutamine glutaminase (349 aa).

A Response regulatory domain is found at 5–122 (RVLSVDDSAL…REGMLAYNEM (118 aa)). Residue D56 is modified to 4-aspartylphosphate. Residues 152 to 344 (LLSSEKLIAI…QQMLAKISAG (193 aa)) form the CheB-type methylesterase domain. Catalysis depends on residues S164, H190, and D286.

Belongs to the CheB family. As to quaternary structure, interacts with CheA. Binds to a C-terminal pentapeptide sequence carried by certain receptors. Post-translationally, phosphorylated by CheA. Phosphorylation of the N-terminal regulatory domain activates the methylesterase activity.

Its subcellular location is the cytoplasm. The enzyme catalyses [protein]-L-glutamate 5-O-methyl ester + H2O = L-glutamyl-[protein] + methanol + H(+). It catalyses the reaction L-glutaminyl-[protein] + H2O = L-glutamyl-[protein] + NH4(+). Methylesterase activity is activated via phosphorylation in response to negative chemotactic stimuli and is inhibited in the presence of attractants. Activation requires both CheA and CheW. Functionally, involved in chemotaxis. Part of a chemotaxis signal transduction system that modulates chemotaxis in response to various stimuli. Catalyzes the demethylation of specific methylglutamate residues introduced into the chemoreceptors (methyl-accepting chemotaxis proteins or MCP) by CheR. Also mediates the irreversible deamidation of specific glutamine residues to glutamic acid. Catalyzes its own deactivation by removing the activating phosphoryl group. The sequence is that of Protein-glutamate methylesterase/protein-glutamine glutaminase from Escherichia coli (strain K12).